Consider the following 71-residue polypeptide: U-scoloptoxin(21)-Sm1a (71 aa).

An N-terminal signal peptide occupies residues Met1–Ala21. Positions Ile45–Ser71 are disordered. A compositionally biased stretch (basic and acidic residues) spans Ala60–Ser71.

The protein belongs to the scoloptoxin-21 family. In terms of tissue distribution, expressed by the venom gland.

The protein localises to the secreted. The protein is U-scoloptoxin(21)-Sm1a of Scolopendra morsitans (Tanzanian blue ringleg centipede).